The following is a 1034-amino-acid chain: Putative beta-glucuronidase (1034 aa).

Residue Glu-432 is the Proton donor of the active site. The 126-residue stretch at 909–1034 folds into the CBM6 domain; it reads VDISAEEGVL…GPFIDELFID (126 aa).

The protein belongs to the glycosyl hydrolase 2 family.

The protein resides in the cytoplasm. The enzyme catalyses a beta-D-glucuronoside + H2O = D-glucuronate + an alcohol. Functionally, glycoside hydrolase that may be involved in ulvan degradation. Ulvan is the main polysaccharide component of the Ulvales (green seaweed) cell wall. It is composed of disaccharide building blocks comprising 3-sulfated rhamnose (Rha3S) linked to D-glucuronic acid (GlcA), L-iduronic acid (IduA), or D-xylose (Xyl). The polypeptide is Putative beta-glucuronidase (Formosa agariphila (strain DSM 15362 / KCTC 12365 / LMG 23005 / KMM 3901 / M-2Alg 35-1)).